We begin with the raw amino-acid sequence, 402 residues long: MSRRLFTSESVTEGHPDKIADQISDTILDALLREDPTSRVAVETLITTGLVHVAGEVTTKAYADIPNLVRNKVLEIGYDSSKKGFDGASCGVSVSIGAQSPDIAQGVDTAYEKRVEGDEDELDKQGAGDQGLMFGYACDETPELMPLPIHVAHRLSRRLSEVRKNGTIPYLRPDGKTQVTIEYDGDKAVRLDTVVVSSQHASDIDLDSLLAPDIREFVVEHVLAQLVEDGIKLDTEGYRLLVNPTGRFEIGGPMGDAGLTGRKIIIDTYGGMARHGGGAFSGKDPSKVDRSAAYAMRWVAKNVVAAGLAARCEVQVAYAIGKAEPVGLFVETFGTAAVDTEKIENAIGEVFDLRPAAIIRDLDLLRPIYAQTAAYGHFGRELPDFTWERTDRVDALRAAAGL.

ATP is bound at residue His15. Residue Asp17 coordinates Mg(2+). Glu43 provides a ligand contact to K(+). L-methionine contacts are provided by Glu56 and Gln99. Positions 99–109 are flexible loop; sequence QSPDIAQGVDT. Residues 174–176, 247–248, Asp256, 262–263, Ala279, and Lys283 each bind ATP; these read DGK, RF, and RK. Asp256 is an L-methionine binding site. Lys287 provides a ligand contact to L-methionine.

It belongs to the AdoMet synthase family. As to quaternary structure, homotetramer; dimer of dimers. Mg(2+) is required as a cofactor. It depends on K(+) as a cofactor.

It is found in the cytoplasm. It catalyses the reaction L-methionine + ATP + H2O = S-adenosyl-L-methionine + phosphate + diphosphate. It participates in amino-acid biosynthesis; S-adenosyl-L-methionine biosynthesis; S-adenosyl-L-methionine from L-methionine: step 1/1. Catalyzes the formation of S-adenosylmethionine (AdoMet) from methionine and ATP. The overall synthetic reaction is composed of two sequential steps, AdoMet formation and the subsequent tripolyphosphate hydrolysis which occurs prior to release of AdoMet from the enzyme. The sequence is that of S-adenosylmethionine synthase from Streptomyces griseus subsp. griseus (strain JCM 4626 / CBS 651.72 / NBRC 13350 / KCC S-0626 / ISP 5235).